The sequence spans 320 residues: Cytochrome f (320 aa).

Positions 1–35 are cleaved as a signal peptide; it reads MQTRKTFSWIKEEITRSISVLLMIYIITWASISNA. Residues tyrosine 36, cysteine 56, cysteine 59, and histidine 60 each contribute to the heme site. The helical transmembrane segment at 286 to 306 threads the bilayer; that stretch reads VQGLLFFLASVILAQIFLVLK.

Belongs to the cytochrome f family. As to quaternary structure, the 4 large subunits of the cytochrome b6-f complex are cytochrome b6, subunit IV (17 kDa polypeptide, petD), cytochrome f and the Rieske protein, while the 4 small subunits are PetG, PetL, PetM and PetN. The complex functions as a dimer. It depends on heme as a cofactor.

It is found in the plastid. The protein resides in the chloroplast thylakoid membrane. Its function is as follows. Component of the cytochrome b6-f complex, which mediates electron transfer between photosystem II (PSII) and photosystem I (PSI), cyclic electron flow around PSI, and state transitions. In Manihot esculenta (Cassava), this protein is Cytochrome f.